Consider the following 335-residue polypeptide: SAM pointed domain-containing Ets transcription factor (335 aa).

The segment covering 1–20 (MGSASPGLSSVSPSHLLLPP) has biased composition (low complexity). Disordered stretches follow at residues 1–25 (MGSA…TVSR) and 75–100 (AKAP…DSQA). The region spanning 129–213 (EVLKDIETAC…AHLDIWKSAA (85 aa)) is the PNT domain. A DNA-binding region (ETS) is located at residues 249–332 (IHLWQFLKEL…ISQRLVYQFV (84 aa)).

This sequence belongs to the ETS family. In terms of assembly, interacts with the DNA-binding domain of the androgen receptor. Interacts with NKX3-1. Expressed in a very restricted set of primarily hormone-regulated epithelial tissues with particularly high expression in the prostate gland. Significantly lower expression is seen in other hormone regulated tissues such as mammary gland, salivary gland, and ovary. Expressed in prostate carcinoma cells.

The protein localises to the nucleus. May function as an androgen-independent transactivator of the prostate-specific antigen (PSA) promoter. Binds to 5'-GGAT-3' DNA sequences. May play a role in the regulation of the prostate gland and/or prostate cancer development. Acts as a transcriptional activator for SERPINB5 promoter. The chain is SAM pointed domain-containing Ets transcription factor (SPDEF) from Homo sapiens (Human).